The chain runs to 329 residues: Helicase VP6-A (329 aa).

2 disordered regions span residues 27-130 (INLV…TNGG) and 189-232 (DLRR…SEEP). Basic and acidic residues-rich tracts occupy residues 36 to 58 (EGGK…KDGE), 65 to 83 (GQKE…DRRI), and 96 to 109 (SGER…RGDG). Lysine 110 contacts ATP. Over residues 110–129 (KVGGGGGDADAGVGATGTNG) the composition is skewed to gly residues. Composition is skewed to basic and acidic residues over residues 189-207 (DLRR…ERGG) and 215-232 (HGDA…SEEP).

It belongs to the reoviruses VP6 family. In terms of assembly, homohexamer.

It is found in the virion. The catalysed reaction is ATP + H2O = ADP + phosphate + H(+). Its function is as follows. ATP dependent RNA helicase essential for RNA packaging and viral transcription. Possesses ss- and dsRNA-binding capacity. The polypeptide is Helicase VP6-A (Segment-9) (Antilocapra americana (Pronghorn)).